Consider the following 37-residue polypeptide: ESDGAHAKARADKPARSATNRQPGCCNNPACVKHRCG.

Residues 1-15 (ESDGAHAKARADKPA) show a composition bias toward basic and acidic residues. A propeptide spanning residues 1 to 22 (ESDGAHAKARADKPARSATNRQ) is cleaved from the precursor. Residues 1 to 23 (ESDGAHAKARADKPARSATNRQP) are disordered. 2 disulfides stabilise this stretch: Cys-25–Cys-31 and Cys-26–Cys-36. Residue Cys-36 is modified to Cysteine amide.

It belongs to the conotoxin A superfamily. Expressed by the venom duct.

The protein resides in the secreted. In terms of biological role, alpha-conotoxins act on postsynaptic membranes, they bind to the nicotinic acetylcholine receptors (nAChR) and thus inhibit them. This toxin inhibits high voltage-activated (HVA) calcium channel currents in rat DRG neurons (13% inhibition at 1 uM toxin) probably by activating GABA(B) receptors (GABBR1 and/or GABBR2). This Conus kinoshitai (Kinoshita's cone) protein is Alpha-conotoxin-like Kn1.2.